The following is a 94-amino-acid chain: Myosuppressin (94 aa).

The signal sequence occupies residues 1–24 (MMSPTLMILISITTMAILSGESFG). The propeptide occupies 25–80 (AMPAQCNSEFLEELPPRLRKICVAIARIWDAREMNDFVDDREYRENLPRYDSSVKR). Gln-81 is subject to Pyrrolidone carboxylic acid. Phe-90 is subject to Phenylalanine amide.

As to expression, expressed throughout the nervous system (at protein level).

The protein resides in the secreted. Functionally, myoinhibiting neuropeptide. The protein is Myosuppressin of Camponotus floridanus (Florida carpenter ant).